Here is a 501-residue protein sequence, read N- to C-terminus: Mitochondrial inner membrane i-AAA protease supercomplex subunit MGR3 (501 aa).

Over 1 to 77 (MLLQGMRLSQ…PKPNLKKKNR (77 aa)) the chain is Mitochondrial matrix. The interval 39 to 72 (RPPASNFNTQESAPIPESPANSPTRPQMAPKPNL) is disordered. Residues 78-95 (SLMYSIIGVSIVGLYFWF) traverse the membrane as a helical segment. Over 96-501 (KSNSRKQKLP…LKAAKKEGLN (406 aa)) the chain is Mitochondrial intermembrane. 4 TPR repeats span residues 109 to 144 (QKVWKEAIWQESDKMDFNYKEALRRYIEALDECDRS), 154 to 187 (TRIELKIAEMYEKLNMLEEAQNLYQELLSRFFEA), 386 to 420 (GTYIKAVRFVRKNRDLCLERAQKCYDSVIAFAKRN), and 440 to 473 (ALSTYGMGVLSLHEGVLAKAEKLFKDSITMAKET).

Belongs to the MGR3 family. Component of the mitochondrial inner membrane i-AAA protease supercomplex composed of MGR1, MGR3 and YME1. With MGR1, forms a subcomplex that binds to YME1 and to substrates to facilitate proteolysis.

It is found in the mitochondrion inner membrane. In terms of biological role, component of the mitochondrial inner membrane i-AAA protease supercomplex, which degrades misfolded mitochondrial proteins. Together with MGR1, functions in an adapter complex that targets substrates to the i-AAA protease for degradation. Required for growth of cells lacking the mitochondrial genome. The sequence is that of Mitochondrial inner membrane i-AAA protease supercomplex subunit MGR3 (MGR3) from Saccharomyces cerevisiae (strain ATCC 204508 / S288c) (Baker's yeast).